Reading from the N-terminus, the 379-residue chain is Queuine tRNA-ribosyltransferase (379 aa).

Asp94 functions as the Proton acceptor in the catalytic mechanism. Substrate contacts are provided by residues 94-98 (DSGGF), Asp148, Gln191, and Gly218. An RNA binding region spans residues 249 to 255 (GVGSPDA). Asp268 (nucleophile) is an active-site residue. Residues 273-277 (TRIAR) are RNA binding; important for wobble base 34 recognition. Residues Cys306, Cys308, Cys311, and His337 each coordinate Zn(2+).

The protein belongs to the queuine tRNA-ribosyltransferase family. As to quaternary structure, homodimer. Within each dimer, one monomer is responsible for RNA recognition and catalysis, while the other monomer binds to the replacement base PreQ1. It depends on Zn(2+) as a cofactor.

The catalysed reaction is 7-aminomethyl-7-carbaguanine + guanosine(34) in tRNA = 7-aminomethyl-7-carbaguanosine(34) in tRNA + guanine. It participates in tRNA modification; tRNA-queuosine biosynthesis. Functionally, catalyzes the base-exchange of a guanine (G) residue with the queuine precursor 7-aminomethyl-7-deazaguanine (PreQ1) at position 34 (anticodon wobble position) in tRNAs with GU(N) anticodons (tRNA-Asp, -Asn, -His and -Tyr). Catalysis occurs through a double-displacement mechanism. The nucleophile active site attacks the C1' of nucleotide 34 to detach the guanine base from the RNA, forming a covalent enzyme-RNA intermediate. The proton acceptor active site deprotonates the incoming PreQ1, allowing a nucleophilic attack on the C1' of the ribose to form the product. After dissociation, two additional enzymatic reactions on the tRNA convert PreQ1 to queuine (Q), resulting in the hypermodified nucleoside queuosine (7-(((4,5-cis-dihydroxy-2-cyclopenten-1-yl)amino)methyl)-7-deazaguanosine). This is Queuine tRNA-ribosyltransferase from Staphylococcus aureus (strain Mu3 / ATCC 700698).